The primary structure comprises 198 residues: Translation machinery-associated protein 22 (198 aa).

Positions 99–170 (VIIKREARTK…EVETYIHSLL (72 aa)) constitute an SUI1 domain.

It belongs to the DENR family. In terms of assembly, interacts with the 40S ribosomal subunit.

It is found in the cytoplasm. This chain is Translation machinery-associated protein 22 (TMA22), found in Saccharomyces cerevisiae (strain YJM789) (Baker's yeast).